Here is a 544-residue protein sequence, read N- to C-terminus: MGPAARLAALLAVLAFRAGDPAEVAARGDTFSALTSVARALAPERRLLGLLRRYLRGEEARLRDLTRFYHKVLSLHEDSATPVSNPLLAFTLIKRLQSDWKNVVHSLEASENIRALKDGYERVEQDLPAFEDLEGAARALMRLQDVYMLNVKGLARGVFQRVTGSAVTDLYSPRRLFSLTGDDCFQVGKVAYDMGDYYHAIPWLEEAVSLFRGSYGEWKTEDEASLEDALDHLAFAYFQAGNVLCALNLSREFLLYSPDNKRVARNVLKYEKLLAESPNQAVAETVMQRPNVPHLQTRDTYEGLCQTLGSQPTHYRIPSLYCSYETSSSPYLLLQPVRKEVIHLEPYVVLYHDFVSDAEAQTIRGLAEPWLQRSVVASGEKQLPVEYRISKSAWLKDTVDPVLVTLDHRIAALTGLDVQPPYAEYLQVVNYGIGGHYEPHFDHATSPSSPLYRMNSGNRVATFMIYLSSVEAGGATAFIYGNFSVPVVKNAALFWWNLHRSGEGDGDTLHAACPVLVGDKWVANKWIHEYGQEFRRPCSSRPED.

An N-terminal signal peptide occupies residues 1 to 19 (MGPAARLAALLAVLAFRAG). Residues 107–131 (LEASENIRALKDGYERVEQDLPAFE) adopt a coiled-coil conformation. The TPR repeat unit spans residues 227-260 (EDALDHLAFAYFQAGNVLCALNLSREFLLYSPDN). Asn-248 carries an N-linked (GlcNAc...) asparagine glycan. Positions 422-529 (YAEYLQVVNY…KWVANKWIHE (108 aa)) constitute a Fe2OG dioxygenase domain. Fe cation-binding residues include His-440 and Asp-442. N-linked (GlcNAc...) asparagine glycosylation occurs at Asn-482. Position 510 (His-510) interacts with Fe cation. A 2-oxoglutarate-binding site is contributed by Lys-520.

It belongs to the P4HA family. As to quaternary structure, heterotetramer of two alpha-3 chains and two beta chains (the beta chain is the multi-functional PDI). It depends on Fe(2+) as a cofactor. The cofactor is L-ascorbate. In terms of processing, N-glycosylation plays no role in the catalytic activity.

The protein resides in the endoplasmic reticulum lumen. It carries out the reaction L-prolyl-[collagen] + 2-oxoglutarate + O2 = trans-4-hydroxy-L-prolyl-[collagen] + succinate + CO2. In terms of biological role, catalyzes the post-translational formation of 4-hydroxyproline in -Xaa-Pro-Gly- sequences in collagens and other proteins. This Bos taurus (Bovine) protein is Prolyl 4-hydroxylase subunit alpha-3 (P4HA3).